Here is a 345-residue protein sequence, read N- to C-terminus: Uroporphyrinogen decarboxylase (345 aa).

Residues 27 to 31 (RQAGR), Phe46, Asp76, Tyr152, Ser207, and His321 each bind substrate.

Belongs to the uroporphyrinogen decarboxylase family. As to quaternary structure, homodimer.

Its subcellular location is the cytoplasm. The catalysed reaction is uroporphyrinogen III + 4 H(+) = coproporphyrinogen III + 4 CO2. It functions in the pathway porphyrin-containing compound metabolism; protoporphyrin-IX biosynthesis; coproporphyrinogen-III from 5-aminolevulinate: step 4/4. Functionally, catalyzes the decarboxylation of four acetate groups of uroporphyrinogen-III to yield coproporphyrinogen-III. This Staphylococcus aureus (strain Mu3 / ATCC 700698) protein is Uroporphyrinogen decarboxylase.